The primary structure comprises 306 residues: Tyrosine recombinase EUBREC_2677 (306 aa).

A Core-binding (CB) domain is found at 2–84 (NNLQTHISSY…SIKAFFHYLE (83 aa)). The region spanning 106-296 (ILPKTIPLYI…AVSKQKDILI (191 aa)) is the Tyr recombinase domain. Catalysis depends on residues R155, K179, H248, R251, and H274. Catalysis depends on Y283, which acts as the O-(3'-phospho-DNA)-tyrosine intermediate.

The protein belongs to the 'phage' integrase family.

The protein localises to the cytoplasm. Its function is as follows. Site-specific tyrosine recombinase, which acts by catalyzing the cutting and rejoining of the recombining DNA molecules. This chain is Tyrosine recombinase EUBREC_2677, found in Agathobacter rectalis (strain ATCC 33656 / DSM 3377 / JCM 17463 / KCTC 5835 / VPI 0990) (Eubacterium rectale).